A 236-amino-acid chain; its full sequence is Small ribosomal subunit protein uS2c (236 aa).

It belongs to the universal ribosomal protein uS2 family.

The protein localises to the plastid. Its subcellular location is the chloroplast. The polypeptide is Small ribosomal subunit protein uS2c (rps2) (Olimarabidopsis pumila (Dwarf rocket)).